Here is a 206-residue protein sequence, read N- to C-terminus: Large ribosomal subunit protein uL4 (206 aa).

Residues 44 to 87 (KRQGTHATKTRGMKRGGGAKPWRQKGTGRARAGSTRSPLWRGGG) are disordered.

This sequence belongs to the universal ribosomal protein uL4 family. Part of the 50S ribosomal subunit.

Its function is as follows. One of the primary rRNA binding proteins, this protein initially binds near the 5'-end of the 23S rRNA. It is important during the early stages of 50S assembly. It makes multiple contacts with different domains of the 23S rRNA in the assembled 50S subunit and ribosome. Functionally, forms part of the polypeptide exit tunnel. The protein is Large ribosomal subunit protein uL4 of Maridesulfovibrio salexigens (strain ATCC 14822 / DSM 2638 / NCIMB 8403 / VKM B-1763) (Desulfovibrio salexigens).